The chain runs to 624 residues: FAD-dependent monooxygenase apdD (624 aa).

Positions 73 and 359 each coordinate FAD.

It belongs to the paxM FAD-dependent monooxygenase family. FAD serves as cofactor.

It functions in the pathway secondary metabolite biosynthesis. In terms of biological role, FAD-dependent monooxygenase; part of the gene cluster that mediates the biosynthesis of aspyridones. The polyketide-amino acid backbone preaspyridone A is first assembled by the PKS-NRPS hybrid apdA. The assembly of preaspyridone A is initiated by loading of malonyl-CoA onto apdA, followed by decarboxylation to yield the acetyl starter unit. The growing polyketide chain then elongates into a tetraketide. The adpA PKS module catalyzes three Claisen condensations, as well as beta-keto processing and methylation. Alpha-methylation step during polyketide synthesis is a prerequisite and a key checkpoint for chain transfer between PKS and NRPS modules. The downstream NRPS module contains the condensation (C), adenylation (A), and thiolation (T) domains and catalyzes the incorporation of tyrosine via the formation of the L-tyrosinyl-thioester and the amide linkage between L-tyrosinyl-thioester and the tetraketide. The bimodular assembly line is terminated with a reductase (R) domain that facilitates formation and release of the tetramic acid product. Because apdA lacks a designated enoylreductase (ER) domain, the required activity is provided the enoyl reductase apdC. ApdC appears to operate with different stereoselectivity in different PKS cycle. Combined with apdC, apdA is proposed to synthesize preaspyridone A via about 20 enzymatic steps. A number of oxidative steps performed successively by the cytochrome P450 monooxygenases apdE and apdB are required for the conversion of preaspyridone A to aspyridone A. The cytochrome P450 monooxygenase apdE is responsible for the oxidative dephenylation of preaspyridone A. Finally, the predicted FAD-dependent monooxygenase apdD and the acyl-CoA dehydrogenase apdG may be involved in the transformation of aspyridone A into aspyridone B. The sequence is that of FAD-dependent monooxygenase apdD from Emericella nidulans (strain FGSC A4 / ATCC 38163 / CBS 112.46 / NRRL 194 / M139) (Aspergillus nidulans).